A 274-amino-acid polypeptide reads, in one-letter code: NAD(P)H dehydrogenase [quinone] 1 (274 aa).

FAD contacts are provided by residues His12, 18 to 19 (FN), and Gln67. Ser82 is subject to Phosphoserine. Residue 104-107 (LQWF) coordinates FAD. 126–128 (AYT) lines the substrate pocket. FAD is bound by residues 148-151 (TTGG), Tyr156, and Arg201. The tract at residues 225–274 (PSSLFDLNFQAGFLMKKEVQDEEKNKKFGLSVGHHLGKSIPTDNQIKARK) is important for apoenzyme conformational stability. Residues Lys250 and Lys251 each participate in a glycyl lysine isopeptide (Lys-Gly) (interchain with G-Cter in SUMO2) cross-link.

Belongs to the NAD(P)H dehydrogenase (quinone) family. In terms of assembly, homodimer. Interacts with PDLIM4 isoform 2; this interaction stabilizes PDLIM4 isoform 2 in response to oxidative stress and protects it from ubiquitin-independent degradation by the core 20S proteasome. Interacts with TP73 (via SAM domain); this interaction is NADH-dependent, stabilizes TP73 in response to oxidative stress and protects it from ubiquitin-independent degradation by the 20S proteasome. Interacts with TP53; this interaction is NADH-dependent, stabilizes TP53 in response to oxidative stress and protects it from ubiquitin-independent degradation by the 20S proteasome. It depends on FAD as a cofactor.

It is found in the cytoplasm. The protein localises to the cytosol. The enzyme catalyses a quinone + NADH + H(+) = a quinol + NAD(+). The catalysed reaction is a quinone + NADPH + H(+) = a quinol + NADP(+). It catalyses the reaction ubiquinone-10 + NADH + H(+) = ubiquinol-10 + NAD(+). It carries out the reaction menadione + NADH + H(+) = menadiol + NAD(+). Flavin-containing quinone reductase that catalyzes two-electron reduction of quinones to hydroquinones using either NADH or NADPH as electron donors. In a ping-pong kinetic mechanism, the electrons are sequentially transferred from NAD(P)H to flavin cofactor and then from reduced flavin to the quinone, bypassing the formation of semiquinone and reactive oxygen species. Regulates cellular redox state primarily through quinone detoxification. Reduces components of plasma membrane redox system such as coenzyme Q and vitamin quinones, producing antioxidant hydroquinone forms. In the process may function as superoxide scavenger to prevent hydroquinone oxidation and facilitate excretion. Alternatively, can activate quinones and their derivatives by generating redox reactive hydroquinones with DNA cross-linking antitumor potential. Acts as a gatekeeper of the core 20S proteasome known to degrade proteins with unstructured regions. Upon oxidative stress, interacts with tumor suppressors TP53 and TP73 in a NADH-dependent way and inhibits their ubiquitin-independent degradation by the 20S proteasome. This is NAD(P)H dehydrogenase [quinone] 1 (NQO1) from Pongo abelii (Sumatran orangutan).